Consider the following 178-residue polypeptide: Large ribosomal subunit protein uL6 (178 aa).

Belongs to the universal ribosomal protein uL6 family. As to quaternary structure, part of the 50S ribosomal subunit.

Functionally, this protein binds to the 23S rRNA, and is important in its secondary structure. It is located near the subunit interface in the base of the L7/L12 stalk, and near the tRNA binding site of the peptidyltransferase center. In Francisella tularensis subsp. mediasiatica (strain FSC147), this protein is Large ribosomal subunit protein uL6.